The sequence spans 484 residues: Glutamate--tRNA ligase (484 aa).

Residues 11–21 (PSPTGLLHIGN) carry the 'HIGH' region motif. A 'KMSKS' region motif is present at residues 255 to 259 (KLSKR). Lysine 258 is a binding site for ATP.

The protein belongs to the class-I aminoacyl-tRNA synthetase family. Glutamate--tRNA ligase type 1 subfamily. In terms of assembly, monomer.

Its subcellular location is the cytoplasm. The enzyme catalyses tRNA(Glu) + L-glutamate + ATP = L-glutamyl-tRNA(Glu) + AMP + diphosphate. Functionally, catalyzes the attachment of glutamate to tRNA(Glu) in a two-step reaction: glutamate is first activated by ATP to form Glu-AMP and then transferred to the acceptor end of tRNA(Glu). The chain is Glutamate--tRNA ligase from Streptococcus agalactiae serotype Ia (strain ATCC 27591 / A909 / CDC SS700).